Consider the following 379-residue polypeptide: Probable RNA 3'-terminal phosphate cyclase-like protein (379 aa).

Belongs to the RNA 3'-terminal cyclase family. Type 2 subfamily. In terms of assembly, part of the small subunit (SSU) processome, composed of more than 70 proteins and the RNA chaperone small nucleolar RNA (snoRNA) U3.

The protein resides in the nucleus. It localises to the nucleolus. In terms of biological role, part of the small subunit (SSU) processome, first precursor of the small eukaryotic ribosomal subunit. During the assembly of the SSU processome in the nucleolus, many ribosome biogenesis factors, an RNA chaperone and ribosomal proteins associate with the nascent pre-rRNA and work in concert to generate RNA folding, modifications, rearrangements and cleavage as well as targeted degradation of pre-ribosomal RNA by the RNA exosome. Does not have cyclase activity. The chain is Probable RNA 3'-terminal phosphate cyclase-like protein from Caenorhabditis elegans.